We begin with the raw amino-acid sequence, 122 residues long: Large ribosomal subunit protein uL14 (122 aa).

The protein belongs to the universal ribosomal protein uL14 family. As to quaternary structure, part of the 50S ribosomal subunit. Forms a cluster with proteins L3 and L19. In the 70S ribosome, L14 and L19 interact and together make contacts with the 16S rRNA in bridges B5 and B8.

Functionally, binds to 23S rRNA. Forms part of two intersubunit bridges in the 70S ribosome. In Bordetella parapertussis (strain 12822 / ATCC BAA-587 / NCTC 13253), this protein is Large ribosomal subunit protein uL14.